A 1017-amino-acid polypeptide reads, in one-letter code: MPWDVKFSHGLYLPQLGWWLDAHFPQKRSFVSHAHSDHTATHDEILCSAGTAALMRARLDAKRIEHVLPFGQTEQLTADCGVTLHPAGHIFGSAQCLLEHGEHGSLLYTGDFKLRRGRSAEPCATPHAELVIMETTFGRPHYVFPPTAQVLNDIATFCHETIADDGVPVLFGYSLGKSQELLCSLEESQLPVMLHPQTHKLTRVYEQFGIAFPPYREFDLATVRGHVVICPPQSRESAFVRRIPGHRTAMITGWAMDPGAIYRYQCDAAFPLSDHADYQDLLRFVEAVNPQRVLTLHGFATEFAQTLRERGLEAWAIGEDNQLELGIRSSPPQVRAGDATPSSRSSGDAGVAAPACATPLHAPDSFARFVAAADAVKATPKKLEKIAVLRDYLAALTPPDMGTAATFLTGRAFPQRDPRNLTLGWSVIKRAVLEVAGVTEADYRDAYHRFADTGDAAGAVLAQRSLRPGDATPSSRPEILGVAGVADPGPAASRPAATSAPTTCSLADMALFFERAAAARGPAAKLDLLRERLALITPDEARYLIKIITGDLRIGLKEGLVEEALAAAAGQPLEAVREAAMLCGDIAAVARAARTDTLAEIQLTVFNPLQFMLASPEPTAEAIVDRFAAQRTAEAAAIVAGVGDPGPGSSSPATADAAPALARIWLEEKYDGIRCQLHKSGGRVELYSRDLNVITEQFPDLARAALALPHDFIGDGELLAWRDGRALPFAELQKRLGRKGGDDFFLGAEIPVSISFYDLLWLDGRSLLKEPLRERRALLERLLHGDATPSSRPDGDEGVAAPALQPATLNPQLSTKFSLAPVTFAHTASDIEAAFLAARQRGNEGLMAKDPASGYTPGRRGLAWLKLKKAYATLDVVVVGVEYGHGKRRDVLSDYTFAIRDEEHDNQLLTVGKAYSGLTDVEIAQLTQHFLEHTLEVHGRYRVVVPDTVIEVAFDTIQPSSRHQSGFALRFPRIARIRTDKTPAEIDTLATCRKLAAAAGSGGIAAVGARPPPAASD.

The tract at residues methionine 1 to proline 363 is unknown. The interval glycine 326 to alanine 352 is disordered. Residues aspartate 364–aspartate 1017 are DNA ligase. Glutamate 667 serves as a coordination point for ATP. Residue lysine 669 is the N6-AMP-lysine intermediate of the active site. ATP-binding residues include arginine 674, arginine 689, glutamate 717, arginine 860, and lysine 866.

The protein in the C-terminal section; belongs to the ATP-dependent DNA ligase family. Requires Mg(2+) as cofactor.

The enzyme catalyses ATP + (deoxyribonucleotide)n-3'-hydroxyl + 5'-phospho-(deoxyribonucleotide)m = (deoxyribonucleotide)n+m + AMP + diphosphate.. DNA ligase that seals nicks in double-stranded DNA during DNA replication, DNA recombination and DNA repair. The chain is Probable DNA ligase (lig) from Opitutus terrae (strain DSM 11246 / JCM 15787 / PB90-1).